Reading from the N-terminus, the 305-residue chain is Protoheme IX farnesyltransferase (305 aa).

9 helical membrane passes run 31-51 (VMSL…YSVH), 52-72 (PFIA…AGAI), 102-119 (ALSF…FMAL), 123-145 (LLAS…IWLK), 151-171 (NIVI…AAVS), 179-199 (IILF…LALF), 218-238 (ILYT…VSLM), 240-260 (FFIG…GLVF), and 281-301 (FAYS…TSTI).

The protein belongs to the UbiA prenyltransferase family. Protoheme IX farnesyltransferase subfamily.

The protein localises to the cell inner membrane. The enzyme catalyses heme b + (2E,6E)-farnesyl diphosphate + H2O = Fe(II)-heme o + diphosphate. Its pathway is porphyrin-containing compound metabolism; heme O biosynthesis; heme O from protoheme: step 1/1. In terms of biological role, converts heme B (protoheme IX) to heme O by substitution of the vinyl group on carbon 2 of heme B porphyrin ring with a hydroxyethyl farnesyl side group. The sequence is that of Protoheme IX farnesyltransferase from Rickettsia akari (strain Hartford).